Here is a 393-residue protein sequence, read N- to C-terminus: Thermostable carboxypeptidase 1 (393 aa).

3 residues coordinate Zn(2+): His104, Asp109, and His245. Tyr302 functions as the Proton donor in the catalytic mechanism. Residue Glu373 is the Nucleophile of the active site.

This sequence belongs to the peptidase M20 family. Homotetramer. It depends on Zn(2+) as a cofactor.

In terms of biological role, can release basic, acidic, aromatic, and, to a lesser extent, aliphatic amino acids. This Saccharolobus solfataricus (strain ATCC 35092 / DSM 1617 / JCM 11322 / P2) (Sulfolobus solfataricus) protein is Thermostable carboxypeptidase 1 (cpsA1).